Here is a 425-residue protein sequence, read N- to C-terminus: MMGKLPLGVVSPYVKMSSGGCSDPLKFYATSYCTAYGREEFKPRMGSHVGTGYKSNYRPLVSYQPHLDTLDNPAVGEQIHDTSKSVASQSYAPLEVPDGKQPLPWNLHQTTSGYGREKVNIGPLSKEVRKVHFDTQDHGPQTITGLEPKEVPLIHQQQGKGSTEWENSRYGPRFMTSEYNSKYLKESPNHPDLLLKKTIGSKEETGFTEESTKNPIVFQPPSQAYPGDPVLHPGRSITKSDYLPISHPQGNEFLPVLARGSDRDTGYSRVSERSLNPRMPTPSSQPTSMSHRSYQPPQRMQQSNVALLGRESVGNKEPTGFTLNNPSYVRSSYEQDRDQRYLTTYNQGYFENIPKGLDREGWTRGGIQPQKAGAYALSEPVTHMDTTPNPTETLRHLHPHVGRTLTSVDPFYRDVPHSNRYPTSS.

Disordered stretches follow at residues 259 to 297 (RGSD…YQPP) and 315 to 335 (NKEP…SYEQ). The span at 260–272 (GSDRDTGYSRVSE) shows a compositional bias: basic and acidic residues. Low complexity predominate over residues 277-290 (PRMPTPSSQPTSMS). Positions 321–332 (FTLNNPSYVRSS) are enriched in polar residues.

In terms of assembly, microtubule inner protein component of sperm flagellar doublet microtubules. Interacts with PPP1CA. As to expression, expressed in brain, ovaries and testis. Expressed in the tracheal epithelium and in secondary spermatocytes and spermatids present in the seminiferous tubule. Expressed in ependymal cells lining the ventricular walls of the brain.

It localises to the cell projection. The protein localises to the cilium. It is found in the cytoplasm. The protein resides in the cytoskeleton. Its subcellular location is the flagellum axoneme. The chain is Stabilizer of axonemal microtubules 4 from Rattus norvegicus (Rat).